The following is a 135-amino-acid chain: Allatotropins (135 aa).

An N-terminal signal peptide occupies residues 1 to 22 (MNFSMHLVLAVAAAACLCVVTA). F51 carries the phenylalanine amide modification. Positions 55–135 (DRPHTRAELY…SSEELLRNVA (81 aa)) are excised as a propeptide.

In terms of tissue distribution, allatotropin: Expressed in corpora cardiaca (CC), corpora allata (CA), antennal lobe (AL) and gnathal ganglion (GNG) (protein level). Expression in AL detected in all animals, expression in GNG detected in most animals and expression in CA and CC detected in few animals (at protein level). Allatotropin-PP-1: Expressed in corpora cardiaca (CC), corpora allata (CA), antennal lobe (AL) and gnathal ganglion (GNG) (at protein level). Expression in AL detected in all animals and expression in GNG, CA and CC detected in some animals (at protein level).

It localises to the secreted. Functionally, neuropeptide stimulator of juvenile hormone synthesis. This chain is Allatotropins, found in Agrotis ipsilon (Black cutworm moth).